The chain runs to 109 residues: Nucleoid-associated protein ECA1177 (109 aa).

This sequence belongs to the YbaB/EbfC family. In terms of assembly, homodimer.

It localises to the cytoplasm. The protein localises to the nucleoid. In terms of biological role, binds to DNA and alters its conformation. May be involved in regulation of gene expression, nucleoid organization and DNA protection. This Pectobacterium atrosepticum (strain SCRI 1043 / ATCC BAA-672) (Erwinia carotovora subsp. atroseptica) protein is Nucleoid-associated protein ECA1177.